The sequence spans 842 residues: Leucine--tRNA ligase (842 aa).

A 'HIGH' region motif is present at residues 62-72 (PYPSGDLHMGH). The tract at residues 390 to 414 (GDEDPAETGVATAGEGTLKNSGELD) is disordered. A 'KMSKS' region motif is present at residues 607–611 (AMSKS). Lysine 610 serves as a coordination point for ATP.

This sequence belongs to the class-I aminoacyl-tRNA synthetase family.

Its subcellular location is the cytoplasm. The enzyme catalyses tRNA(Leu) + L-leucine + ATP = L-leucyl-tRNA(Leu) + AMP + diphosphate. This chain is Leucine--tRNA ligase, found in Paenarthrobacter aurescens (strain TC1).